The primary structure comprises 1036 residues: PDZ domain-containing RING finger protein 4 (1036 aa).

The segment at 18-56 (CKLCGQVLEEPLCTPCGHVFCASCLLPWAVRRRRCPLQC) adopts an RING-type; degenerate zinc-finger fold. Gly residues predominate over residues 129-160 (ARGGCGPTPRAGRGGGARGGPPGGRWGRGRGP). The interval 129–161 (ARGGCGPTPRAGRGGGARGGPPGGRWGRGRGPG) is disordered. 2 consecutive PDZ domains span residues 224 to 314 (TIVL…LRRT) and 402 to 486 (EVEL…VARP). Residues 515–590 (HNEAMQPTAN…SLKSKRDLGQ (76 aa)) form a disordered region. The segment covering 548-566 (NHEKDSGVGRTDESLRNDE) has biased composition (basic and acidic residues). Positions 655-689 (NQGEQEGVEHELQLLNEELRNIELECQNIMQAHRL) form a coiled coil. Over residues 726–735 (EHPEKSDKDS) the composition is skewed to basic and acidic residues. Residues 726-819 (EHPEKSDKDS…VLEGSKLPDQ (94 aa)) are disordered. A compositionally biased stretch (polar residues) spans 736 to 750 (SSAYNTAESCRSTPL). A compositionally biased stretch (low complexity) spans 774–799 (STMAATQSSSGQSSKESTSTKAKTTE). A compositionally biased stretch (basic and acidic residues) spans 805–819 (ESKEKVLEGSKLPDQ).

The chain is PDZ domain-containing RING finger protein 4 (PDZRN4) from Homo sapiens (Human).